The primary structure comprises 359 residues: 3-dehydroquinate synthase (359 aa).

NAD(+)-binding positions include 71–76, 105–109, 129–130, K142, K151, and 169–172; these read DGEQYK, GVIGD, TT, and CLST. 3 residues coordinate Zn(2+): E184, H247, and H264.

This sequence belongs to the sugar phosphate cyclases superfamily. Dehydroquinate synthase family. The cofactor is Co(2+). It depends on Zn(2+) as a cofactor. Requires NAD(+) as cofactor.

The protein localises to the cytoplasm. It carries out the reaction 7-phospho-2-dehydro-3-deoxy-D-arabino-heptonate = 3-dehydroquinate + phosphate. The protein operates within metabolic intermediate biosynthesis; chorismate biosynthesis; chorismate from D-erythrose 4-phosphate and phosphoenolpyruvate: step 2/7. Its function is as follows. Catalyzes the conversion of 3-deoxy-D-arabino-heptulosonate 7-phosphate (DAHP) to dehydroquinate (DHQ). In Shewanella piezotolerans (strain WP3 / JCM 13877), this protein is 3-dehydroquinate synthase.